The following is a 251-amino-acid chain: Ribonuclease PH (251 aa).

Residues R90 and 128–130 contribute to the phosphate site; that span reads GTR.

It belongs to the RNase PH family. In terms of assembly, homohexameric ring arranged as a trimer of dimers.

The enzyme catalyses tRNA(n+1) + phosphate = tRNA(n) + a ribonucleoside 5'-diphosphate. Phosphorolytic 3'-5' exoribonuclease that plays an important role in tRNA 3'-end maturation. Removes nucleotide residues following the 3'-CCA terminus of tRNAs; can also add nucleotides to the ends of RNA molecules by using nucleoside diphosphates as substrates, but this may not be physiologically important. Probably plays a role in initiation of 16S rRNA degradation (leading to ribosome degradation) during starvation. In Leifsonia xyli subsp. xyli (strain CTCB07), this protein is Ribonuclease PH.